The sequence spans 272 residues: MMEPKSIFLLGLLLFRVGKLMRNDKLAWSAEYEAKKFKFYHNTSLFLTLQSTGPEMTNLCKKSWCDKVDDYFVVPHHYVNWQKPTEQWLIHHFSKMILHTRRLPQQAQWYMFAFDNNYFFVERLIKELSKFDSHLPIYTILRDFHADIQHKPVLIFSRSALNTFYDLEEENCSENAENVEEWLTTCMSIPPITISVDRSKKSRIFAIKRHFQVDEMKTMPNDYHDDKDYIHRHSSSLLSFTNLSLEDLKLLPIFVEKVQGGYKKKAASKILF.

The first 20 residues, 1 to 20 (MMEPKSIFLLGLLLFRVGKL), serve as a signal peptide directing secretion.

This is an uncharacterized protein from Caenorhabditis elegans.